The primary structure comprises 500 residues: L-arabinose isomerase (500 aa).

Positions 306, 333, 350, and 450 each coordinate Mn(2+).

It belongs to the arabinose isomerase family. Homohexamer. Requires Mn(2+) as cofactor.

The catalysed reaction is beta-L-arabinopyranose = L-ribulose. Its pathway is carbohydrate degradation; L-arabinose degradation via L-ribulose; D-xylulose 5-phosphate from L-arabinose (bacterial route): step 1/3. Its function is as follows. Catalyzes the conversion of L-arabinose to L-ribulose. This chain is L-arabinose isomerase, found in Salmonella typhi.